The sequence spans 444 residues: CCA-adding enzyme (444 aa).

Residues Ser57 and Arg60 each coordinate ATP. Residues Ser57 and Arg60 each contribute to the CTP site. 3 residues coordinate Mg(2+): Asp69, Asp71, and Asp124. ATP is bound by residues His147, Lys168, and Tyr177. 3 residues coordinate CTP: His147, Lys168, and Tyr177.

This sequence belongs to the tRNA nucleotidyltransferase/poly(A) polymerase family. Archaeal CCA-adding enzyme subfamily. In terms of assembly, homodimer. Mg(2+) serves as cofactor.

It carries out the reaction a tRNA precursor + 2 CTP + ATP = a tRNA with a 3' CCA end + 3 diphosphate. It catalyses the reaction a tRNA with a 3' CCA end + 2 CTP + ATP = a tRNA with a 3' CCACCA end + 3 diphosphate. In terms of biological role, catalyzes the addition and repair of the essential 3'-terminal CCA sequence in tRNAs without using a nucleic acid template. Adds these three nucleotides in the order of C, C, and A to the tRNA nucleotide-73, using CTP and ATP as substrates and producing inorganic pyrophosphate. tRNA 3'-terminal CCA addition is required both for tRNA processing and repair. Also involved in tRNA surveillance by mediating tandem CCA addition to generate a CCACCA at the 3' terminus of unstable tRNAs. While stable tRNAs receive only 3'-terminal CCA, unstable tRNAs are marked with CCACCA and rapidly degraded. This is CCA-adding enzyme from Methanococcus maripaludis (strain C5 / ATCC BAA-1333).